The sequence spans 494 residues: Alanine--glyoxylate aminotransferase 2-like (494 aa).

Lysine 291 carries the post-translational modification N6-(pyridoxal phosphate)lysine.

It belongs to the class-III pyridoxal-phosphate-dependent aminotransferase family. Pyridoxal 5'-phosphate is required as a cofactor.

This Drosophila melanogaster (Fruit fly) protein is Alanine--glyoxylate aminotransferase 2-like.